The chain runs to 176 residues: Peptide deformylase (176 aa).

Residues Cys94 and His136 each contribute to the Fe cation site. Residue Glu137 is part of the active site. His140 provides a ligand contact to Fe cation.

The protein belongs to the polypeptide deformylase family. Fe(2+) is required as a cofactor.

The catalysed reaction is N-terminal N-formyl-L-methionyl-[peptide] + H2O = N-terminal L-methionyl-[peptide] + formate. In terms of biological role, removes the formyl group from the N-terminal Met of newly synthesized proteins. Requires at least a dipeptide for an efficient rate of reaction. N-terminal L-methionine is a prerequisite for activity but the enzyme has broad specificity at other positions. The protein is Peptide deformylase of Mesorhizobium japonicum (strain LMG 29417 / CECT 9101 / MAFF 303099) (Mesorhizobium loti (strain MAFF 303099)).